Here is a 146-residue protein sequence, read N- to C-terminus: D-aminoacyl-tRNA deacylase (146 aa).

Residues 137-138 (GP) carry the Gly-cisPro motif, important for rejection of L-amino acids motif.

Belongs to the DTD family. Homodimer.

The protein resides in the cytoplasm. The enzyme catalyses glycyl-tRNA(Ala) + H2O = tRNA(Ala) + glycine + H(+). It catalyses the reaction a D-aminoacyl-tRNA + H2O = a tRNA + a D-alpha-amino acid + H(+). Functionally, an aminoacyl-tRNA editing enzyme that deacylates mischarged D-aminoacyl-tRNAs. Also deacylates mischarged glycyl-tRNA(Ala), protecting cells against glycine mischarging by AlaRS. Acts via tRNA-based rather than protein-based catalysis; rejects L-amino acids rather than detecting D-amino acids in the active site. By recycling D-aminoacyl-tRNA to D-amino acids and free tRNA molecules, this enzyme counteracts the toxicity associated with the formation of D-aminoacyl-tRNA entities in vivo and helps enforce protein L-homochirality. The polypeptide is D-aminoacyl-tRNA deacylase (Desulfatibacillum aliphaticivorans).